The primary structure comprises 230 residues: Fibrillarin-like rRNA/tRNA 2'-O-methyltransferase (230 aa).

Residues 87–88 (TT), 105–106 (EF), 130–131 (DA), and 150–153 (DVAQ) contribute to the S-adenosyl-L-methionine site.

Belongs to the methyltransferase superfamily. Fibrillarin family. As to quaternary structure, interacts with nop5. Component of box C/D small ribonucleoprotein (sRNP) particles that contain rpl7ae, FlpA and nop5, plus a guide RNA.

Functionally, involved in pre-rRNA and tRNA processing. Utilizes the methyl donor S-adenosyl-L-methionine to catalyze the site-specific 2'-hydroxyl methylation of ribose moieties in rRNA and tRNA. Site specificity is provided by a guide RNA that base pairs with the substrate. Methylation occurs at a characteristic distance from the sequence involved in base pairing with the guide RNA. This is Fibrillarin-like rRNA/tRNA 2'-O-methyltransferase from Methanococcus maripaludis (strain C6 / ATCC BAA-1332).